Reading from the N-terminus, the 443-residue chain is Ribosomal protein uS12 methylthiotransferase RimO (443 aa).

One can recognise an MTTase N-terminal domain in the interval 8 to 118 (PKVGFVSLGC…VVNAVHEVVP (111 aa)). Residues cysteine 17, cysteine 53, cysteine 82, cysteine 151, cysteine 155, and cysteine 158 each coordinate [4Fe-4S] cluster. Residues 137-376 (LTPRHYAYLK…AHQQAISSAR (240 aa)) form the Radical SAM core domain. Positions 378–443 (QLRIGKEIEV…DEYDMWAEPV (66 aa)) constitute a TRAM domain.

The protein belongs to the methylthiotransferase family. RimO subfamily. It depends on [4Fe-4S] cluster as a cofactor.

The protein localises to the cytoplasm. The catalysed reaction is L-aspartate(89)-[ribosomal protein uS12]-hydrogen + (sulfur carrier)-SH + AH2 + 2 S-adenosyl-L-methionine = 3-methylsulfanyl-L-aspartate(89)-[ribosomal protein uS12]-hydrogen + (sulfur carrier)-H + 5'-deoxyadenosine + L-methionine + A + S-adenosyl-L-homocysteine + 2 H(+). Its function is as follows. Catalyzes the methylthiolation of an aspartic acid residue of ribosomal protein uS12. The sequence is that of Ribosomal protein uS12 methylthiotransferase RimO from Pseudomonas putida (strain W619).